Reading from the N-terminus, the 132-residue chain is MEPISHVVKSSLPNYLSSLPIPDSFGGWFKLSFKDWLALIPPTVVVAGLGYTTYLAFCPAARCAGKDSGRCNSSIRKNEAKVVTMVDVEDIAGQAAFCRCWKTKNWPYCDGSHGEHNKQTGDNVGPVVVKKK.

Residues 1-35 lie on the Lumenal side of the membrane; the sequence is MEPISHVVKSSLPNYLSSLPIPDSFGGWFKLSFKD. The chain crosses the membrane as a helical span at residues 36–58; it reads WLALIPPTVVVAGLGYTTYLAFC. At 59–132 the chain is on the cytoplasmic side; sequence PAARCAGKDS…NVGPVVVKKK (74 aa). [2Fe-2S] cluster is bound by residues Cys98, Cys100, Cys109, and His113.

The protein belongs to the CISD protein family. CISD2 subfamily. [2Fe-2S] cluster is required as a cofactor.

Its subcellular location is the endoplasmic reticulum membrane. The protein is CDGSH iron-sulfur domain-containing protein 2 homolog of Drosophila persimilis (Fruit fly).